Here is a 3095-residue protein sequence, read N- to C-terminus: Centrosome-associated protein 350 (3095 aa).

2 disordered regions span residues Met1–Gln24 and Thr63–Leu105. Residues Pro14 to Gln24 show a composition bias toward polar residues. Residues Ser84 and Ser140 each carry the phosphoserine modification. 3 disordered regions span residues Asp219 to Met239, Ser251 to Gln272, and Lys430 to Ser493. The segment covering Ser228–Asn238 has biased composition (polar residues). Residues Ser251–Ser265 are compositionally biased toward low complexity. Basic and acidic residues-rich tracts occupy residues Met438 to Ala457 and Gly464 to His476. The residue at position 468 (Ser468) is a Phosphoserine. Over residues Arg481–Ala491 the composition is skewed to low complexity. A Phosphoserine modification is found at Ser503. 2 disordered regions span residues Gln538–Lys623 and Ala671–Pro718. 2 stretches are compositionally biased toward basic and acidic residues: residues Tyr587–Lys623 and Glu690–Glu699. The stretch at Ile596–Thr641 forms a coiled coil. A Phosphoserine modification is found at Ser691. Low complexity predominate over residues Pro701–Glu714. A phosphoserine mark is found at Ser874 and Ser935. The interval Ser977–Arg996 is disordered. A compositionally biased stretch (low complexity) spans Ser979 to Ser988. The residue at position 1057 (Ser1057) is a Phosphoserine. Disordered stretches follow at residues Tyr1099–Leu1128 and Gln1151–Leu1265. Over residues Leu1119–Leu1128 the composition is skewed to polar residues. Over residues Ser1153 to Ser1168 the composition is skewed to low complexity. Over residues Asp1194 to Ser1206 the composition is skewed to basic and acidic residues. Ser1200 is subject to Phosphoserine. Low complexity predominate over residues Gln1251 to Leu1265. Thr1253 bears the Phosphothreonine mark. Phosphoserine occurs at positions 1256 and 1259. Residues Ile1363 to Val1402 are a coiled coil. Disordered regions lie at residues Ala1490–Ser1668, Leu1720–Leu1739, Lys1787–Gln1864, and Ala1893–Ser2017. The segment covering Gln1503–Arg1513 has biased composition (basic and acidic residues). Composition is skewed to low complexity over residues Ser1517 to Ser1526 and Ser1536 to Pro1545. Over residues Lys1551–Ser1564 the composition is skewed to basic and acidic residues. Residue Ser1606 is modified to Phosphoserine. Positions Glu1624–Asp1640 are enriched in basic and acidic residues. A phosphoserine mark is found at Ser1641 and Ser1646. Residues Lys1700–Glu1793 adopt a coiled-coil conformation. A compositionally biased stretch (basic and acidic residues) spans Lys1787–Leu1796. Ser1812 is modified (phosphoserine). Over residues Glu1819 to Ser1835 the composition is skewed to low complexity. 2 stretches are compositionally biased toward basic and acidic residues: residues Ser1845–Gln1864 and Trp1894–Gln1915. A coiled-coil region spans residues Lys1850–Ala1893. Ser1930 carries the phosphoserine modification. Positions Ser1980 to Ser1994 are enriched in low complexity. The span at Glu1999–Cys2011 shows a compositional bias: basic and acidic residues. The stretch at Ile2043 to Glu2092 forms a coiled coil. Ser2108 bears the Phosphoserine mark. Disordered stretches follow at residues Lys2116–Ala2155, Ile2191–Ala2265, Leu2286–Glu2427, and Val2440–Glu2471. Basic and acidic residues predominate over residues His2133–Arg2151. Residue Ser2198 is modified to Phosphoserine. 2 stretches are compositionally biased toward basic and acidic residues: residues Ser2202–Leu2214 and Asn2227–Ser2259. A compositionally biased stretch (polar residues) spans Leu2286–Gln2300. Positions Asp2301–Pro2331 are enriched in basic and acidic residues. A compositionally biased stretch (polar residues) spans Asp2349–Ser2362. 2 stretches are compositionally biased toward basic and acidic residues: residues Ile2377–Ser2387 and Leu2395–Gln2407. Over residues Thr2409–Gly2420 the composition is skewed to low complexity. 2 positions are modified to phosphoserine: Ser2421 and Ser2450. Residues Met2455–His2465 show a composition bias toward basic and acidic residues. One can recognise a CAP-Gly domain in the interval Gly2504 to Pro2546. A Phosphothreonine modification is found at Thr2671. Residues Leu2700–Thr2731 are a coiled coil. The disordered stretch occupies residues Gln2767–Ser2793. Residues Leu2780 to Val2791 show a composition bias toward polar residues. Ser2809 and Ser2818 each carry phosphoserine.

As to quaternary structure, part of a ternary complex that contains CEP350, CEP43 and MAPRE1. Interacts (via C-terminus) directly with CEP43 (via N-terminus). Interacts with NR1H3, PPARA, PPARD and PPARG. Interacts directly with microtubules. Interacts with the fusion protein CEP43-FGFR1, and by doing so recruits and activates PI3K and PLC-gamma. Interacts with CYLD. Interacts with CFAP157. Interacts with CEP19 (via C-terminus). Interacts with CEP78; promoting CEP78 localization to centrosome and centriole. Post-translationally, phosphorylated during mitosis.

The protein resides in the cytoplasm. It is found in the cytoskeleton. Its subcellular location is the microtubule organizing center. The protein localises to the centrosome. It localises to the spindle. The protein resides in the nucleus. It is found in the centriole. Its subcellular location is the cilium basal body. Plays an essential role in centriole growth by stabilizing a procentriolar seed composed of at least, SASS6 and CPAP. Required for anchoring microtubules to the centrosomes and for the integrity of the microtubule network. Recruits PPARA to discrete subcellular compartments and thereby modulates PPARA activity. Required for ciliation. The polypeptide is Centrosome-associated protein 350 (Mus musculus (Mouse)).